The sequence spans 416 residues: Probable histone-binding protein lin-53 (416 aa).

WD repeat units lie at residues 118 to 158, 170 to 210, 220 to 260, 263 to 303, 307 to 347, and 364 to 404; these read NHEG…SVPK, GHTK…GANG, GHES…PGHA, AHSA…LKLH, SHRD…EDQT, and GHTA…YNDV.

Belongs to the WD repeat RBAP46/RBAP48/MSI1 family. Binds directly to helix 1 of the histone fold of histone H4, a region that is not accessible when H4 is in chromatin. Probable component of a NuRD-like complex, composed of at least lin-53 and hda-1. Interacts with lin-35. Interacts with hda-1; the interaction is direct. Component of the DRM complex, at least composed of lin-9, lin-35, lin-37, lin-52, lin-53, lin-54- dpl-1 and efl-1. Interacts with hcp-3.

Its subcellular location is the nucleus. It is found in the chromosome. It localises to the centromere. Its function is as follows. Core histone-binding subunit that may target chromatin assembly factors, chromatin remodeling factors and histone deacetylases to their histone substrates in a manner that is regulated by nucleosomal DNA. Required for hcp-3 and his-1 stabilization, localization of hcp-3 to centromeres and for proper chromosome segregation. Synthetic multivulva class B (synMuvB) protein. SynMuvB proteins are required to repress the induction of vulval development by Ras signaling and probably act by forming the multiprotein DRM complex that represses transcription. This chain is Probable histone-binding protein lin-53, found in Caenorhabditis briggsae.